Reading from the N-terminus, the 335-residue chain is Taste receptor type 2 member 119 (335 aa).

At 1 to 7 (MMEGHML) the chain is on the extracellular side. Residues 8-28 (FFLLVVVVQFLTGVLANGLIV) traverse the membrane as a helical segment. The Cytoplasmic segment spans residues 29 to 43 (VVNAIDLIMWKKMAP). A helical transmembrane segment spans residues 44–64 (LDLLLFCLATSRIILQLCILF). Residues 65-81 (AQLGLSCLVRHTLFADN) lie on the Extracellular side of the membrane. An N-linked (GlcNAc...) asparagine glycan is attached at Asn-81. A helical membrane pass occupies residues 82–102 (VTFVYIINELSLWFATWLGVF). The Cytoplasmic portion of the chain corresponds to 103 to 124 (YCAKIATIPHPLFLWLKMRISR). The helical transmembrane segment at 125 to 145 (LVPWLILASVVYVTVTTFIHS) threads the bilayer. Residues 146–176 (RETSELPKQIFISFFSKNTTRVRPAHATLLS) lie on the Extracellular side of the membrane. N-linked (GlcNAc...) asparagine glycosylation is present at Asn-163. The helical transmembrane segment at 177 to 197 (VFVFGLTLPFLIFTVAVLLLL) threads the bilayer. At 198-224 (SSLWNHSRQMRTMVGTREPSRHALVSA) the chain is on the cytoplasmic side. The chain crosses the membrane as a helical span at residues 225 to 245 (MLSILSFLILYLSHDMVAVLI). At 246-256 (CTQGLHFGSRT) the chain is on the extracellular side. A helical transmembrane segment spans residues 257–277 (FAFCLLVIGMYPSLHSIVLIL). At 278 to 335 (GNPKLKRNAKTFIVHCKCCHCARAWVTSRNPRLSDLPVPATHHSANKTSCSEACIMPS) the chain is on the cytoplasmic side.

Belongs to the G-protein coupled receptor T2R family. In terms of tissue distribution, expressed in subsets of taste receptor cells of the tongue and palate epithelium and exclusively in gustducin-positive cells. Expressed in 15% taste bud cells in circumvallate and foliate papillae but only in 2% in fungiform papillae. Expressed in the gastro and duodenal tissue. Not expressed in colon, liver, heart and kidney.

The protein resides in the membrane. In terms of biological role, gustducin-coupled receptor implicated in the perception of bitter compounds in the oral cavity and the gastrointestinal tract. Signals through PLCB2 and the calcium-regulated cation channel TRPM5. This Mus musculus (Mouse) protein is Taste receptor type 2 member 119 (Tas2r119).